Reading from the N-terminus, the 638-residue chain is MQEIITNNIPTFKLQNDVDMVEETQPTTPTTQPTTPTTNTISTTTNTITSTLNTNNISPILEESEEEDSNELIIETDENNTSVSATGTTPTSSSSSSSSSPTNTTTTTTTTTTATTANNDFKNITSNNINKTNSNVNTNSEIKNIDNSIMNSLNRYNNITTASPSNSTMITMKSAISSLDEIVKNTMKAQRESFIANEDKESLPEPQTNSNVNGNEEAKDEKEIHLLAKILLNFSSNGIAVPNLSESSPAVLNTKLKDSSNLVPYGGDLNTSVNGVVGNSSGMVDLSASTGDLLGSLNAANKKKRQRTSPEQLAILEQIFETDKMPSQQIRVRLANQLGMSSRRVQIWFQNKRAKVKRGGPFGKGDDNDDLFAEGEDIIDEDEDEDSSLTIDESGNNNNNSGNNNNNNNNGIMGGHGMLSSSPTNLNTSSDNIVPSISPMLTSININSSSSTPTLQSVNLLNNTNNNNNNNNNNNNNNNNNNNNNNNHTTTTTTTTTTTTTSSSPPLTSFNFQLNQSLNKLTSPPSPPSIVPSPNKKTKQMGGFSLNSTASSLPSFPQIKLNSSSKHIPTDKQNNSDFSNFNNNNNNNNNNNNNNNNNNNINNNGNNNSNNNDSNNNNNKSNFSDYQPLKFHNSIVKN.

Disordered stretches follow at residues glutamate 23 to asparagine 55, threonine 76 to asparagine 139, and isoleucine 195 to lysine 219. Low complexity-rich tracts occupy residues threonine 24 to asparagine 55 and asparagine 80 to asparagine 139. Residues glutamate 205–glycine 214 show a composition bias toward polar residues. Residues asparagine 301–glycine 360 constitute a DNA-binding region (homeobox). Disordered stretches follow at residues glutamate 381 to aspartate 431 and serine 448 to asparagine 638. Composition is skewed to low complexity over residues serine 388–glycine 411, leucine 419–serine 430, and asparagine 462–threonine 501. Composition is skewed to polar residues over residues serine 502–threonine 522 and serine 545–glutamine 573. Over residues asparagine 575–aspartate 625 the composition is skewed to low complexity.

The protein resides in the nucleus. Its function is as follows. Putative transcription factor. The chain is Homeobox protein 10 (hbx10) from Dictyostelium discoideum (Social amoeba).